A 142-amino-acid chain; its full sequence is uncharacterized protein (142 aa).

The next 2 helical transmembrane spans lie at 12-29 (NAILRPISDIFVLIYGLL) and 44-66 (IYGQLSLLLWGTKFLATILGVTA).

It localises to the cell membrane. This is an uncharacterized protein from Archaeoglobus fulgidus (strain ATCC 49558 / DSM 4304 / JCM 9628 / NBRC 100126 / VC-16).